The following is a 730-amino-acid chain: Elongation factor 2 (730 aa).

The tr-type G domain occupies 18–238 (DQIRNFGVIA…YSEGKVDELV (221 aa)). GTP-binding positions include 27–34 (AHVDHGKT), 93–97 (DTPGH), and 147–150 (NKVD). A Diphthamide modification is found at His595. The tract at residues 711–730 (RKRKGLAPDPPTVSEFIDRE) is disordered.

The protein belongs to the TRAFAC class translation factor GTPase superfamily. Classic translation factor GTPase family. EF-G/EF-2 subfamily.

The protein localises to the cytoplasm. Its function is as follows. Catalyzes the GTP-dependent ribosomal translocation step during translation elongation. During this step, the ribosome changes from the pre-translocational (PRE) to the post-translocational (POST) state as the newly formed A-site-bound peptidyl-tRNA and P-site-bound deacylated tRNA move to the P and E sites, respectively. Catalyzes the coordinated movement of the two tRNA molecules, the mRNA and conformational changes in the ribosome. The polypeptide is Elongation factor 2 (Cenarchaeum symbiosum (strain A)).